We begin with the raw amino-acid sequence, 185 residues long: Elongation factor P (185 aa).

The protein belongs to the elongation factor P family.

The protein localises to the cytoplasm. Its pathway is protein biosynthesis; polypeptide chain elongation. In terms of biological role, involved in peptide bond synthesis. Stimulates efficient translation and peptide-bond synthesis on native or reconstituted 70S ribosomes in vitro. Probably functions indirectly by altering the affinity of the ribosome for aminoacyl-tRNA, thus increasing their reactivity as acceptors for peptidyl transferase. This chain is Elongation factor P, found in Dictyoglomus turgidum (strain DSM 6724 / Z-1310).